A 393-amino-acid chain; its full sequence is Decapping nuclease dom-3 (393 aa).

The disordered stretch occupies residues 1–37 (MSHYGGNPRGNSSHQFGRKDFQQSDSKHIPKITGQPL). A compositionally biased stretch (basic and acidic residues) spans 17–28 (GRKDFQQSDSKH). Residues Arg-74, Glu-113, and 144–146 (WRG) contribute to the substrate site. Positions 205, 257, 259, 269, and 270 each coordinate Mg(2+). Position 257 (Glu-257) interacts with substrate. Lys-271 and Gln-293 together coordinate substrate.

This sequence belongs to the DXO/Dom3Z family. The cofactor is Mg(2+).

The catalysed reaction is a 5'-end NAD(+)-phospho-ribonucleoside in mRNA + H2O = a 5'-end phospho-ribonucleoside in mRNA + NAD(+) + H(+). It catalyses the reaction a 5'-end (N(7)-methyl 5'-triphosphoguanosine)-ribonucleoside-ribonucleotide in mRNA + H2O = a (N(7)-methyl 5'-triphosphoguanosine)-nucleoside + a 5'-end phospho-ribonucleoside in mRNA + H(+). It carries out the reaction a 5'-end triphospho-ribonucleoside in mRNA + H2O = a 5'-end phospho-ribonucleoside in mRNA + diphosphate + H(+). Its function is as follows. Decapping enzyme for NAD-capped RNAs: specifically hydrolyzes the nicotinamide adenine dinucleotide (NAD) cap from a subset of RNAs by removing the entire NAD moiety from the 5'-end of an NAD-capped RNA. The NAD-cap is present at the 5'-end of some RNAs and snoRNAs. In contrast to the canonical 5'-end N7 methylguanosine (m7G) cap, the NAD cap promotes mRNA decay. Also acts as a non-canonical decapping enzyme that removes the entire cap structure of m7G capped or incompletely capped RNAs and mediates their subsequent degradation. Specifically degrades pre-mRNAs with a defective 5'-end m7G cap and is part of a pre-mRNA capping quality control. Also possesses RNA 5'-pyrophosphohydrolase activity by hydrolyzing the 5'-end triphosphate to release pyrophosphates. This chain is Decapping nuclease dom-3, found in Caenorhabditis elegans.